The chain runs to 540 residues: L-aspartate oxidase (540 aa).

Residues 16-19, lysine 38, 45-52, and aspartate 223 each bind FAD; these read SGAA and STFYAQGG. Residue arginine 290 is the Proton donor/acceptor of the active site. FAD contacts are provided by residues glutamate 375 and 391-392; that span reads SL.

It belongs to the FAD-dependent oxidoreductase 2 family. NadB subfamily. The cofactor is FAD.

Its subcellular location is the cytoplasm. It carries out the reaction L-aspartate + O2 = iminosuccinate + H2O2. It participates in cofactor biosynthesis; NAD(+) biosynthesis; iminoaspartate from L-aspartate (oxidase route): step 1/1. Functionally, catalyzes the oxidation of L-aspartate to iminoaspartate, the first step in the de novo biosynthesis of NAD(+). The protein is L-aspartate oxidase (nadB) of Salmonella typhimurium (strain LT2 / SGSC1412 / ATCC 700720).